The sequence spans 161 residues: TM2 domain-containing protein DDB_G0278163 (161 aa).

Topologically, residues 1–24 (MGHHHHHHGGSGHHHHHHHHGSGH) are cytoplasmic. A helical transmembrane segment spans residues 25–45 (YGGGAVLVTPIVTPVPVVYGS). Over 46–54 (RSSSYCPKS) the chain is Extracellular. Residues 52–100 (PKSMTVAYVLWFFFGILGFHRLYLGRVGTFFLYFFTAGVFGLGWLFDAF) enclose the TM2 domain. A helical membrane pass occupies residues 55–75 (MTVAYVLWFFFGILGFHRLYL). Residues 76–80 (GRVGT) are Cytoplasmic-facing. A helical transmembrane segment spans residues 81–101 (FFLYFFTAGVFGLGWLFDAFY). Over 102 to 161 (THKMVKHYNECEFTKSCVGQSPPATIPIYQSEGAYPTYQQVPQQPPQFYQPQQQQPQYQP) the chain is Extracellular. The segment at 139–161 (YQQVPQQPPQFYQPQQQQPQYQP) is disordered.

Belongs to the TM2 family.

Its subcellular location is the membrane. The polypeptide is TM2 domain-containing protein DDB_G0278163 (Dictyostelium discoideum (Social amoeba)).